The sequence spans 224 residues: MNSDLALLRLLQLASPGLPVGGFTYSQGLEWAVEAGWVRGVDGFVAWQREQVHDTLACLDWPVLARLYHACQAEDAAAFGHWSRFLLANRETAELRLEEQQRGAALARLLDGWQLGQAPAWRASLELSQLGGMAWLAAHWAIPLRQLALGHGFAWLEGAVMAGVKLVPFGQQAAQTLLRDLGNELPAALDQALGLGDDQLGGGLPLLAIASSRHETQYTRLFRS.

It belongs to the UreF family. As to quaternary structure, ureD, UreF and UreG form a complex that acts as a GTP-hydrolysis-dependent molecular chaperone, activating the urease apoprotein by helping to assemble the nickel containing metallocenter of UreC. The UreE protein probably delivers the nickel.

The protein resides in the cytoplasm. Required for maturation of urease via the functional incorporation of the urease nickel metallocenter. This chain is Urease accessory protein UreF, found in Pseudomonas putida (strain GB-1).